A 242-amino-acid polypeptide reads, in one-letter code: ATP synthase subunit a (242 aa).

A run of 6 helical transmembrane segments spans residues 29–49 (SSIY…LAFY), 84–104 (FIPL…LGMT), 114–134 (IIVT…VGFV), 140–160 (FLTL…MIVI), 181–201 (MAGH…MIYL), and 203–223 (FLPI…AILQ).

Belongs to the ATPase A chain family. In terms of assembly, F-type ATPases have 2 components, CF(1) - the catalytic core - and CF(0) - the membrane proton channel. CF(1) has five subunits: alpha(3), beta(3), gamma(1), delta(1), epsilon(1). CF(0) has three main subunits: a(1), b(2) and c(9-12). The alpha and beta chains form an alternating ring which encloses part of the gamma chain. CF(1) is attached to CF(0) by a central stalk formed by the gamma and epsilon chains, while a peripheral stalk is formed by the delta and b chains.

It is found in the cell membrane. Functionally, key component of the proton channel; it plays a direct role in the translocation of protons across the membrane. The sequence is that of ATP synthase subunit a from Rickettsia africae (strain ESF-5).